The primary structure comprises 351 residues: Fructose-1,6-bisphosphatase class 1 (351 aa).

Glu-94, Asp-113, Leu-115, and Asp-116 together coordinate Mg(2+). Substrate contacts are provided by residues 116 to 119 (DGSS) and Asn-207. Residue Glu-279 coordinates Mg(2+).

This sequence belongs to the FBPase class 1 family. In terms of assembly, homotetramer. Requires Mg(2+) as cofactor.

The protein resides in the cytoplasm. The enzyme catalyses beta-D-fructose 1,6-bisphosphate + H2O = beta-D-fructose 6-phosphate + phosphate. It functions in the pathway carbohydrate biosynthesis; gluconeogenesis. The sequence is that of Fructose-1,6-bisphosphatase class 1 from Methylobacterium radiotolerans (strain ATCC 27329 / DSM 1819 / JCM 2831 / NBRC 15690 / NCIMB 10815 / 0-1).